Consider the following 198-residue polypeptide: Holliday junction resolvase RecU (198 aa).

Residues 1–22 are disordered; sequence MVNYPHKLSSQKRQTSLSQPKN. Positions 11 to 22 are enriched in polar residues; that stretch reads QKRQTSLSQPKN. Mg(2+)-binding residues include T81, D83, E96, and Q115.

The protein belongs to the RecU family. It depends on Mg(2+) as a cofactor.

The protein resides in the cytoplasm. It catalyses the reaction Endonucleolytic cleavage at a junction such as a reciprocal single-stranded crossover between two homologous DNA duplexes (Holliday junction).. Endonuclease that resolves Holliday junction intermediates in genetic recombination. Cleaves mobile four-strand junctions by introducing symmetrical nicks in paired strands. Promotes annealing of linear ssDNA with homologous dsDNA. Required for DNA repair, homologous recombination and chromosome segregation. The chain is Holliday junction resolvase RecU from Streptococcus pneumoniae (strain Hungary19A-6).